Consider the following 257-residue polypeptide: uncharacterized protein (257 aa).

Disordered stretches follow at residues 1 to 164 (MERS…AGAC) and 225 to 257 (TAWS…RARA). Residues 10–28 (CGEEPRSGSRRLPKAEGDK) are compositionally biased toward basic and acidic residues. A compositionally biased stretch (basic residues) spans 54 to 65 (RPNRASGRRRRS). Positions 125–139 (RPTPRPCAGPAPPPA) are enriched in pro residues. A compositionally biased stretch (basic residues) spans 144–162 (RCRRPRRWPRAGRRGRRAG).

This is an uncharacterized protein from Homo sapiens (Human).